Consider the following 457-residue polypeptide: Bifunctional protein GlmU (457 aa).

The interval 1–228 is pyrophosphorylase; that stretch reads MEELVSVILA…SEEIIGVNSR (228 aa). UDP-N-acetyl-alpha-D-glucosamine is bound by residues 9–12, K23, Q73, and 78–79; these read LAAG and GT. D102 lines the Mg(2+) pocket. Residues G139, E154, N169, and N226 each coordinate UDP-N-acetyl-alpha-D-glucosamine. Residue N226 coordinates Mg(2+). The interval 229-249 is linker; sequence VQLSNAEKVMRRRINEKHMEN. The segment at 250–457 is N-acetyltransferase; sequence GVTIIDPDST…VEERIKKGRL (208 aa). The UDP-N-acetyl-alpha-D-glucosamine site is built by R331 and K349. The Proton acceptor role is filled by H361. The UDP-N-acetyl-alpha-D-glucosamine site is built by Y364 and N375. Residues 384–385, A421, and R438 contribute to the acetyl-CoA site; that span reads NY.

It in the N-terminal section; belongs to the N-acetylglucosamine-1-phosphate uridyltransferase family. In the C-terminal section; belongs to the transferase hexapeptide repeat family. Homotrimer. Mg(2+) serves as cofactor.

The protein localises to the cytoplasm. The enzyme catalyses alpha-D-glucosamine 1-phosphate + acetyl-CoA = N-acetyl-alpha-D-glucosamine 1-phosphate + CoA + H(+). The catalysed reaction is N-acetyl-alpha-D-glucosamine 1-phosphate + UTP + H(+) = UDP-N-acetyl-alpha-D-glucosamine + diphosphate. It participates in nucleotide-sugar biosynthesis; UDP-N-acetyl-alpha-D-glucosamine biosynthesis; N-acetyl-alpha-D-glucosamine 1-phosphate from alpha-D-glucosamine 6-phosphate (route II): step 2/2. Its pathway is nucleotide-sugar biosynthesis; UDP-N-acetyl-alpha-D-glucosamine biosynthesis; UDP-N-acetyl-alpha-D-glucosamine from N-acetyl-alpha-D-glucosamine 1-phosphate: step 1/1. It functions in the pathway bacterial outer membrane biogenesis; LPS lipid A biosynthesis. In terms of biological role, catalyzes the last two sequential reactions in the de novo biosynthetic pathway for UDP-N-acetylglucosamine (UDP-GlcNAc). The C-terminal domain catalyzes the transfer of acetyl group from acetyl coenzyme A to glucosamine-1-phosphate (GlcN-1-P) to produce N-acetylglucosamine-1-phosphate (GlcNAc-1-P), which is converted into UDP-GlcNAc by the transfer of uridine 5-monophosphate (from uridine 5-triphosphate), a reaction catalyzed by the N-terminal domain. This Caldanaerobacter subterraneus subsp. tengcongensis (strain DSM 15242 / JCM 11007 / NBRC 100824 / MB4) (Thermoanaerobacter tengcongensis) protein is Bifunctional protein GlmU.